A 433-amino-acid polypeptide reads, in one-letter code: MCVCQTMEVGQYGKNASRAGDRGVLLEPFIHQVGGHSSMMRYDDHTVCKPLISREQRFYESLPPEMKEFTPEYKGVVSVCFEGDSDGYINLVAYPYVESETVEQDDTPEREQPRRKHSRRSLHRSGSGSDHKEEKASLSFETSESSQETKSPKVELHSHSDVPFQMLDSNSGLSSEKISYNPWSLRCHKQQLSRMRSESKDRKLYKFLLLENVVHHFKYPCVLDLKMGTRQHGDDASAEKAARQMRKCEQSTSASLGVRVCGMQVYQLDTGHYLCRNKYYGRGLSIEGFRNALYQYLHNGLDLRRDLFEPILSKLRGLKAVLERQASYRFYSSSLLVIYDGKECRSELRLKHVDMGLPEVPPLCGPSTSPSNTSLEAGPSSPPKVDVRMIDFAHSTFKGFRDDPTVHDGPDRGYVFGLENLISIMEQMRDENQ.

Residues 100–160 (ETVEQDDTPE…SPKVELHSHS (61 aa)) form a disordered region. A compositionally biased stretch (basic residues) spans 113–123 (PRRKHSRRSLH). Residues 139–149 (SFETSESSQET) are compositionally biased toward polar residues. The segment covering 150-160 (KSPKVELHSHS) has biased composition (basic and acidic residues). Ser-151 is modified (phosphoserine). 220–228 (PCVLDLKMG) serves as a coordination point for substrate. The segment at 362-383 (PLCGPSTSPSNTSLEAGPSSPP) is disordered. Polar residues predominate over residues 366–375 (PSTSPSNTSL).

Belongs to the inositol phosphokinase (IPK) family.

The protein resides in the cytoplasm. It localises to the nucleus. The enzyme catalyses 1D-myo-inositol hexakisphosphate + ATP = 5-diphospho-1D-myo-inositol 1,2,3,4,6-pentakisphosphate + ADP. The catalysed reaction is 1-diphospho-1D-myo-inositol 2,3,4,5,6-pentakisphosphate + ATP + H(+) = 1,5-bis(diphospho)-1D-myo-inositol 2,3,4,6-tetrakisphosphate + ADP. Converts inositol hexakisphosphate (InsP6) to diphosphoinositol pentakisphosphate (InsP7/PP-InsP5). Converts 1,3,4,5,6-pentakisphosphate (InsP5) to PP-InsP4. This chain is Inositol hexakisphosphate kinase 1 (Ip6k1), found in Rattus norvegicus (Rat).